Consider the following 166-residue polypeptide: Small ribosomal subunit protein uS5 (166 aa).

Positions 11 to 74 (LQEKLIAVNR…EQAKRNLNKV (64 aa)) constitute an S5 DRBM domain.

Belongs to the universal ribosomal protein uS5 family. In terms of assembly, part of the 30S ribosomal subunit. Contacts proteins S4 and S8.

With S4 and S12 plays an important role in translational accuracy. In terms of biological role, located at the back of the 30S subunit body where it stabilizes the conformation of the head with respect to the body. This Aeromonas hydrophila subsp. hydrophila (strain ATCC 7966 / DSM 30187 / BCRC 13018 / CCUG 14551 / JCM 1027 / KCTC 2358 / NCIMB 9240 / NCTC 8049) protein is Small ribosomal subunit protein uS5.